A 148-amino-acid polypeptide reads, in one-letter code: 3-dehydroquinate dehydratase (148 aa).

Y24 serves as the catalytic Proton acceptor. Positions 75, 81, and 88 each coordinate substrate. H101 (proton donor) is an active-site residue. Residues L102–S103 and R112 contribute to the substrate site.

This sequence belongs to the type-II 3-dehydroquinase family. In terms of assembly, homododecamer.

The catalysed reaction is 3-dehydroquinate = 3-dehydroshikimate + H2O. It functions in the pathway metabolic intermediate biosynthesis; chorismate biosynthesis; chorismate from D-erythrose 4-phosphate and phosphoenolpyruvate: step 3/7. Its function is as follows. Catalyzes a trans-dehydration via an enolate intermediate. The protein is 3-dehydroquinate dehydratase of Bartonella henselae (strain ATCC 49882 / DSM 28221 / CCUG 30454 / Houston 1) (Rochalimaea henselae).